Reading from the N-terminus, the 300-residue chain is Porphobilinogen deaminase (300 aa).

At Cys239 the chain carries S-(dipyrrolylmethanemethyl)cysteine.

Belongs to the HMBS family. In terms of assembly, monomer. Requires dipyrromethane as cofactor.

It catalyses the reaction 4 porphobilinogen + H2O = hydroxymethylbilane + 4 NH4(+). Its pathway is porphyrin-containing compound metabolism; protoporphyrin-IX biosynthesis; coproporphyrinogen-III from 5-aminolevulinate: step 2/4. Tetrapolymerization of the monopyrrole PBG into the hydroxymethylbilane pre-uroporphyrinogen in several discrete steps. The sequence is that of Porphobilinogen deaminase from Francisella tularensis subsp. novicida (strain U112).